A 241-amino-acid polypeptide reads, in one-letter code: tRNA pseudouridine synthase A (241 aa).

The active-site Nucleophile is the Asp-53. Tyr-110 lines the substrate pocket.

This sequence belongs to the tRNA pseudouridine synthase TruA family. In terms of assembly, homodimer.

It carries out the reaction uridine(38/39/40) in tRNA = pseudouridine(38/39/40) in tRNA. Functionally, formation of pseudouridine at positions 38, 39 and 40 in the anticodon stem and loop of transfer RNAs. In Malacoplasma penetrans (strain HF-2) (Mycoplasma penetrans), this protein is tRNA pseudouridine synthase A.